Reading from the N-terminus, the 153-residue chain is Pheromone-binding protein Gp-9 (153 aa).

Positions 1–19 are cleaved as a signal peptide; that stretch reads MKTFVLHIFIFALVAFASA. 3 disulfides stabilise this stretch: Cys-37-Cys-77, Cys-73-Cys-129, and Cys-118-Cys-138.

The protein belongs to the PBP/GOBP family. Homodimer.

Its subcellular location is the secreted. Functionally, colony queen number, a major feature of social organization, is associated with worker genotype for Gp-9. Colonies are headed by either a single reproductive queen (monogyne form) or multiple queens (polygyne form). Differences in worker Gp-9 genotypes between social forms may cause differences in workers' abilities to recognize queens and regulate their numbers. The protein is Pheromone-binding protein Gp-9 of Solenopsis invicta (Red imported fire ant).